Reading from the N-terminus, the 111-residue chain is Stress-response A/B barrel domain-containing protein At5g22580 (111 aa).

The region spanning phenylalanine 6–phenylalanine 98 is the Stress-response A/B barrel domain. Positions 31, 34, 35, and 37 each coordinate Mg(2+).

In terms of assembly, homodimer. It depends on Mg(2+) as a cofactor.

Functionally, involved in stress response. The polypeptide is Stress-response A/B barrel domain-containing protein At5g22580 (Arabidopsis thaliana (Mouse-ear cress)).